Reading from the N-terminus, the 478-residue chain is ATP synthase subunit beta (478 aa).

155–162 (GGAGVGKT) is a binding site for ATP.

This sequence belongs to the ATPase alpha/beta chains family. F-type ATPases have 2 components, CF(1) - the catalytic core - and CF(0) - the membrane proton channel. CF(1) has five subunits: alpha(3), beta(3), gamma(1), delta(1), epsilon(1). CF(0) has three main subunits: a(1), b(2) and c(9-12). The alpha and beta chains form an alternating ring which encloses part of the gamma chain. CF(1) is attached to CF(0) by a central stalk formed by the gamma and epsilon chains, while a peripheral stalk is formed by the delta and b chains.

Its subcellular location is the cell inner membrane. The catalysed reaction is ATP + H2O + 4 H(+)(in) = ADP + phosphate + 5 H(+)(out). Its function is as follows. Produces ATP from ADP in the presence of a proton gradient across the membrane. The catalytic sites are hosted primarily by the beta subunits. The protein is ATP synthase subunit beta of Fuscovulum blasticum (Rhodobacter blasticus).